Here is a 609-residue protein sequence, read N- to C-terminus: Nuclear factor 7, brain (609 aa).

Residues 21-75 (NVGSTYPCKRSDGSQHDAEIVKVRYNKQAGREEYYAHYVGLNRRQNEWVDKSRLV) form the Tudor-knot domain. The span at 74–84 (LVLTKPPKEGE) shows a compositional bias: basic and acidic residues. Residues 74–129 (LVLTKPPKEGETNGTDQEVTDTAEQPDSKTPQKRKIEEPEPEPKKAKVEEKDASKN) are disordered. Residues 85-102 (TNGTDQEVTDTAEQPDSK) show a composition bias toward polar residues. Position 103 is a phosphothreonine; by CDK1 (threonine 103). Residues 107-127 (RKIEEPEPEPKKAKVEEKDAS) are compositionally biased toward basic and acidic residues. An RING-type zinc finger spans residues 145–185 (CPLCVELFKDPVMVACGHNFCRSCIDKAWEGQSSFACPECR). Residues 219–260 (RPLEKCSEHDERLKLYCKDDGTLSCVICRDSLKHASHNFLPI) form a B box-type zinc finger. Positions 224, 227, 246, and 252 each coordinate Zn(2+). The stretch at 278–371 (LEASLKVTEQ…SLAKERMEDT (94 aa)) forms a coiled coil. The region spanning 413–609 (GPIQYIMWKE…VDPLRFVHNK (197 aa)) is the B30.2/SPRY domain.

As to quaternary structure, monomer. Threonine (predominantly) and serine residues are phosphorylated during oocyte maturation, when CDK1 is active. At the neurula stage, high expression in dorsal embryo region including neural folds and somites. Also high expression in adult brain (CNS) and low expression in oocytes.

The protein resides in the nucleus. Transcription factor that determines dorsal-ventral body axis. The polypeptide is Nuclear factor 7, brain (Xenopus laevis (African clawed frog)).